The following is a 156-amino-acid chain: uncharacterized protein (156 aa).

An N-terminal signal peptide occupies residues 1–18; that stretch reads MKKLLSIFLMAFSLNAFA. The Thioredoxin domain occupies 19 to 156; the sequence is QTNLADVQLK…AEQIRVFAEK (138 aa). A disulfide bond links C54 and C57.

Belongs to the thioredoxin family.

This is an uncharacterized protein from Haemophilus influenzae (strain ATCC 51907 / DSM 11121 / KW20 / Rd).